The primary structure comprises 523 residues: Light-independent protochlorophyllide reductase subunit B (523 aa).

Position 36 (Asp-36) interacts with [4Fe-4S] cluster. Residue Asp-290 is the Proton donor of the active site. 425–426 contributes to the substrate binding site; the sequence is GL.

This sequence belongs to the ChlB/BchB/BchZ family. In terms of assembly, protochlorophyllide reductase is composed of three subunits; ChlL, ChlN and ChlB. Forms a heterotetramer of two ChlB and two ChlN subunits. [4Fe-4S] cluster is required as a cofactor.

The catalysed reaction is chlorophyllide a + oxidized 2[4Fe-4S]-[ferredoxin] + 2 ADP + 2 phosphate = protochlorophyllide a + reduced 2[4Fe-4S]-[ferredoxin] + 2 ATP + 2 H2O. The protein operates within porphyrin-containing compound metabolism; chlorophyll biosynthesis (light-independent). Component of the dark-operative protochlorophyllide reductase (DPOR) that uses Mg-ATP and reduced ferredoxin to reduce ring D of protochlorophyllide (Pchlide) to form chlorophyllide a (Chlide). This reaction is light-independent. The NB-protein (ChlN-ChlB) is the catalytic component of the complex. The chain is Light-independent protochlorophyllide reductase subunit B from Prochlorococcus marinus (strain MIT 9301).